Reading from the N-terminus, the 367-residue chain is MQVRTPFVALDQRSPLTVDSSCPKRKKCDMDRERERDVKALEPRDLSSTGRIYARSDIKISSSPTVSPTISNSSSPTPTPPASSSVTPLGLPGAVAAAAAAVGGASSAGASSYLHGNHKPITGIPCVAAASRYTAPVHIDVGGTIYTSSLETLTKYPESKLAKLFNGQIPIVLDSLKQHYFIDRDGGMFRHILNFMRNSRLLIAEDFPDLELLLEEARYYEVEPMIKQLESMRKDRVRNGNYLVAPPTPPARHIKTSPRTSASPECNYEVVALHISPDLGERIMLSAERALLDELFPEASQATQSSRSGVSWNQGDWGQIIRFPLNGYCKLNSVQVLTRLLNAGFTIEASVGGQQFSEYLLARRVPM.

Disordered regions lie at residues 16–46 and 62–87; these read LTVD…PRDL and SSPT…SSVT. Residues 28-45 are compositionally biased toward basic and acidic residues; sequence CDMDRERERDVKALEPRD. The 71-residue stretch at 135 to 205 folds into the BTB domain; it reads APVHIDVGGT…MRNSRLLIAE (71 aa). The disordered stretch occupies residues 240–261; that stretch reads GNYLVAPPTPPARHIKTSPRTS.

Its function is as follows. Functions with the transcription factor TfAP-2 to regulate octopamine neuronal signaling pathways that control behaviors such as male aggression, male mating, and the initiation of feeding. Required for TfAP-2 transcriptional activity in octopaminergic neurons. Functions with TfAP-2 to regulate expression of genes which are involved in promoting octopamine production and secretion from octopaminergic neurons, such as Tbh and Vmat. Octopamine then modulates feeding and male aggression by regulating the expression of the satiation hormone Dsk in insulin-producing cells (IPCs). Functions with octopamine and Dsk as part of a negative feedback loop to prevent overeating; acts with TfAP-2 to regulate octopamine signaling pathways that initiate feeding, then octopamine activates expression of Dsk which inhibits consummatory behavior. May also be involved in negatively regulating nociception in larvae to prevent spontaneous pain and hyperalgesia. In Drosophila melanogaster (Fruit fly), this protein is BTB/POZ domain-containing protein Tiwaz.